The sequence spans 391 residues: Probable sugar efflux transporter (391 aa).

12 helical membrane passes run 16–36, 51–71, 82–102, 103–123, 138–158, 171–191, 210–230, 247–267, 277–297, 300–320, 338–358, and 361–381; these read VFVFSLSAFIFNTTEFVPVAL, VGLMITAYAWVVSLGSLPLML, LLFLFALFIASHILSALAWNF, WVLLISRIGIAFAHSIFWSIT, QALGLLALGSSLAMILGLPLG, FGVIGGVATLIALLMWKLLPP, PLLMGIYLLVIMVISGHFTTY, ITTLMLFVFGLAGVAGSFLFG, FIAFAMILVICPQLLLFVFKN, WVIFLQIFLWGIGITSLTIAL, IFSGSYNVGIGSGALFGSIVI, and LGLGYIGFVGGALGLLALFWL.

Belongs to the major facilitator superfamily. SotB (TC 2.A.1.2) family.

The protein resides in the cell inner membrane. Involved in the efflux of sugars. The physiological role may be the reduction of the intracellular concentration of toxic sugars or sugar metabolites. In Helicobacter pylori (strain G27), this protein is Probable sugar efflux transporter.